The chain runs to 603 residues: Cdc42-interacting protein 4 (603 aa).

The interval 1 to 117 (MDWGTELWDQ…EMKQERKMHF (117 aa)) is required for podosome formation and interaction with AKAP9 and microtubules. A required for translocation to the plasma membrane in response to insulin region spans residues 1 to 117 (MDWGTELWDQ…EMKQERKMHF (117 aa)). In terms of domain architecture, F-BAR spans 1–264 (MDWGTELWDQ…AAESVDAKND (264 aa)). The stretch at 67-259 (FSQQQSFVQL…EGMKVAAESV (193 aa)) forms a coiled coil. Residues 293 to 539 (RVPSDSSLGT…YTEFDEDFEE (247 aa)) form an interaction with CDC42 region. Residues 293-603 (RVPSDSSLGT…PTSYLRVTLN (311 aa)) form an interaction with PDE6G region. The tract at residues 295-358 (PSDSSLGTPD…PSSPRSGRDP (64 aa)) is disordered. Residues Ser-296, Ser-298, and Ser-299 each carry the phosphoserine modification. Residues 316–329 (SRAKRWPFGKKNKP) show a composition bias toward basic residues. Over residues 333–346 (SLSLLGGHLPSTLS) the composition is skewed to low complexity. A phosphoserine mark is found at Ser-335 and Ser-351. Positions 388-481 (TEDFSHLPPE…ESRVLSNRGD (94 aa)) form a coiled coil. One can recognise an REM-1 domain in the interval 393-470 (HLPPEQQRKR…VQKYEAWLAE (78 aa)). Positions 471–603 (AESRVLSNRG…PTSYLRVTLN (133 aa)) are required for interaction with FASLG and localization to lysosomes. The segment at 477–541 (SNRGDSLSRH…EFDEDFEEPA (65 aa)) is disordered. Ser-482 carries the phosphoserine modification. The interaction with DNM2 and WASL stretch occupies residues 487–543 (ARPPDPPTTAPPDSSSSSTNSGSQDNKESSSEEPPSEGQDTPIYTEFDEDFEEPASP). Positions 497–510 (PPDSSSSSTNSGSQ) are enriched in low complexity. The tract at residues 532–603 (EFDEDFEEPA…PTSYLRVTLN (72 aa)) is interaction with DNM1 and WASL. The segment at 540-603 (PASPIGQCVA…PTSYLRVTLN (64 aa)) is required for podosome formation. The SH3 domain maps to 542 to 603 (SPIGQCVAIY…PTSYLRVTLN (62 aa)). The interval 546 to 603 (QCVAIYHFEGSSEGTVSMSEGEDLSLMEEDKGDGWTRVRRKQGAEGYVPTSYLRVTLN) is interaction with WAS. Residues 548–603 (VAIYHFEGSSEGTVSMSEGEDLSLMEEDKGDGWTRVRRKQGAEGYVPTSYLRVTLN) are interaction with ARHGAP17, DAAM1, DIAPH1 and DIAPH2.

This sequence belongs to the FNBP1 family. Homodimerizes, the dimers can polymerize end-to-end to form filamentous structures. Interacts with AKAP9, ARHGAP17, DAAM1, DIAPH1, DIAPH2, DNM1, FASLG/FASL, GAPVD1, LYN, microtubules, PDE6G, SRC and WAS/WASP. Interacts with the ligand binding domain of the thyroid receptor (TR) in the presence of thyroid hormone. May interact with CTNNB1 and HD/HTT. Interacts specifically with GTP-bound CDC42 and RHOQ. Interacts with DNM2 and WASL. Post-translationally, tyrosine phosphorylated. Also phosphorylated by PKA.

It localises to the cytoplasm. The protein localises to the cytoskeleton. It is found in the cell cortex. The protein resides in the lysosome. Its subcellular location is the golgi apparatus. It localises to the cell membrane. The protein localises to the cell projection. It is found in the phagocytic cup. Required to coordinate membrane tubulation with reorganization of the actin cytoskeleton during endocytosis. Binds to lipids such as phosphatidylinositol 4,5-bisphosphate and phosphatidylserine and promotes membrane invagination and the formation of tubules. Also promotes CDC42-induced actin polymerization by recruiting WASL/N-WASP which in turn activates the Arp2/3 complex. Actin polymerization may promote the fission of membrane tubules to form endocytic vesicles. Required for the formation of podosomes, actin-rich adhesion structures specific to monocyte-derived cells. May be required for the lysosomal retention of FASLG/FASL. Required for translocation of GLUT4 to the plasma membrane in response to insulin signaling. This Mus musculus (Mouse) protein is Cdc42-interacting protein 4 (Trip10).